A 491-amino-acid polypeptide reads, in one-letter code: Cytochrome P450 81F2 (491 aa).

A helical transmembrane segment spans residues 283-303; that stretch reads VIIKGLMLSMMLAGTDTAAVT. Cysteine 429 contributes to the heme binding site.

The protein belongs to the cytochrome P450 family. Heme serves as cofactor.

It is found in the membrane. It functions in the pathway secondary metabolite biosynthesis. Its function is as follows. Involved in indole glucosinolate biosynthesis. Catalyzes hydroxylation reactions of the glucosinolate indole ring. Converts indol-3-yl-methylglucosinolate (I3M) to 4-hydroxy-indol-3-yl-methylglucosinolate (4OH-I3M) and/or 1-hydroxy-indol-3-yl-methylglucosinolate (1OH-I3M) intermediates. These hydroxy intermediates are converted to 4-methoxy-indol-3-yl-methylglucosinolate (4MO-I3M) and 1-methoxy-indol-3-yl-methylglucosinolate (1MO-I3M) by indole glucosinolate methyltransferase 1 and 2 (IGMT1 and IGMT2). Contributes to defense against the green peach aphid (Myzus persicae), a generalist phloem-feeding herbivore. Required for the biosynthesis of antifungal indole glucosinolate metabolites. Required for the pathogen-induced accumulation of 4MO-I3M, which in turn is activated by the atypical BGLU26/PEN2 myrosinase. Required for the biosynthesis of Trp-derived antifungal compounds and non-host resistance to the necrotrophic fungal pathogen Plectosphaerella cucumerina. Required for resistance to the non-adapted fungal pathogen Colletotrichum gloeosporioides. This Arabidopsis thaliana (Mouse-ear cress) protein is Cytochrome P450 81F2.